Reading from the N-terminus, the 487-residue chain is MAKAVRKSNSEETVPIKAPRKAPGEKIPVVSIVGRQNVGKSTLFNSLLKKKLAITEDYPGVTRDVLSARVYQEEKDLDFYLCDTPGLDIENPDSLSQSILEAAYRQLNESDVIIFLLDKNLVTVADHTLLDYLRKKYGPVDKPIIYCVNKADKELDEFDLEEFYRMGLPEVLPISATGRKNLGLLLEKIKFFLSSKPGKVWIEKISASKKKDAQPLPLAEEDYEFRLAIVGKPNSGKSSLLNAVCGYERAVVSDVAGTTRDSVDTLLEFGNRKLLLTDTAGIRKHSKTAEALEYYSYQRTLKAIESSDLVIHLLDAKKGFGDFDKKITSLLQEKGKPFLIAVNKWDSIEDKTDKTFREYKEKLYSRFPLLNEVPIVTISATERLRVQKLIDLSFDLASRSRRKVSTSELNKNLKNWMSQAGRSFSAHQPPKMLYCTQVSTSPFHLILFVNHVEYFKSNLISFLKKKLTEAYDLQGIPVRLEFRSDRK.

A disordered region spans residues methionine 1–arginine 20. EngA-type G domains are found at residues proline 28–proline 197 and phenylalanine 225–arginine 401. Residues glycine 34–serine 41, aspartate 83–leucine 87, asparagine 149–aspartate 152, glycine 231–serine 238, aspartate 278–isoleucine 282, and asparagine 343–aspartate 346 contribute to the GTP site. The region spanning arginine 402–arginine 486 is the KH-like domain.

Belongs to the TRAFAC class TrmE-Era-EngA-EngB-Septin-like GTPase superfamily. EngA (Der) GTPase family. In terms of assembly, associates with the 50S ribosomal subunit.

Functionally, GTPase that plays an essential role in the late steps of ribosome biogenesis. This chain is GTPase Der, found in Leptospira borgpetersenii serovar Hardjo-bovis (strain L550).